The primary structure comprises 251 residues: Insulin-induced gene 1 protein (251 aa).

Residues 1–58 (MQTLEEHCWSCSCTRGRDKKGTRLSTWLAQRAAKAMSSLNSLLSLAYHTLASSEGRSL) lie on the Cytoplasmic side of the membrane. The chain crosses the membrane as a helical span at residues 59-81 (IRRSLVLFAVGVFLALVLNLLQI). Over 82-100 (QRNVTLFPEEVIATIFSSA) the chain is Extracellular. Residues 101-118 (WWVPPCCGTAAAVVGLLY) traverse the membrane as a helical segment. At 119–133 (PCIDSHLGEPHKFKR) the chain is on the cytoplasmic side. A helical transmembrane segment spans residues 134 to 156 (EWASVMRCIAVFVGINHASAKLD). Residues 157-159 (FAN) lie on the Extracellular side of the membrane. A helical transmembrane segment spans residues 160 to 178 (NVQLSLTLAALSLGLWWTF). Topologically, residues 179–183 (DRSRS) are cytoplasmic. A helical membrane pass occupies residues 184–205 (GLGLGITIAFLATLITQFLVYN). Residues 206–219 (GVYQYTSPDFLYIR) are Extracellular-facing. The helical transmembrane segment at 220–237 (SWLPCIFFSGGVTVGNIG) threads the bilayer. The Cytoplasmic portion of the chain corresponds to 238-251 (RQLAMGSSEKTHSD). Positions 245–251 (SEKTHSD) match the KxHxx motif.

The protein belongs to the INSIG family. As to quaternary structure, interacts with scap; interaction is direct and only takes place in the presence of sterols; it prevents interaction between scap and the coat protein complex II (COPII). Associates with the SCAP-SREBP complex; association is mediated via its interaction with scap and only takes place in the presence of sterols.

The protein resides in the endoplasmic reticulum membrane. Oxysterol-binding protein that mediates feedback control of cholesterol synthesis by controlling both endoplasmic reticulum to Golgi transport of scap and degradation of hmgcr. Acts as a negative regulator of cholesterol biosynthesis by mediating the retention of the SCAP-SREBP complex in the endoplasmic reticulum, thereby blocking the processing of sterol regulatory element-binding proteins (SREBPs). Binds oxysterol, including 25-hydroxycholesterol, regulating interaction with scap and retention of the SCAP-SREBP complex in the endoplasmic reticulum. In presence of oxysterol, interacts with scap, retaining the SCAP-SREBP complex in the endoplasmic reticulum, thereby preventing scap from escorting SREBPs to the Golgi. Sterol deprivation reduces oxysterol-binding, disrupting the interaction between insig1 and scap, thereby promoting Golgi transport of the SCAP-SREBP complex, followed by processing and nuclear translocation of SREBPs. Also regulates cholesterol synthesis by regulating degradation of hmgcr. The polypeptide is Insulin-induced gene 1 protein (Xenopus tropicalis (Western clawed frog)).